We begin with the raw amino-acid sequence, 255 residues long: RNA polymerase sigma-F factor (255 aa).

The short motif at 61–74 (DLFQIGCIGLLKSV) is the Polymerase core binding element. A DNA-binding region (H-T-H motif) is located at residues 221–240 (QSEVAERLGISQVQVSRLEK).

The protein belongs to the sigma-70 factor family. In terms of assembly, interacts transiently with the RNAP core.

Its activity is regulated as follows. Interaction with SpoIIAB inhibits sigma-F activity throughout the cell before the formation of the asymmetric septum; after septation the interaction is confined to the mother cell, and sigma-F activity is released in the prespore. Fin, a second, forespore-specific anti-sigma factor is induced in 2 successive waves by sigma-F and sigma-G, by antagonizing sigma-F it allows the switch to sigma-G factor and progression to the late sporulation development stages. Functionally, sigma factors are initiation factors that promote the attachment of RNA polymerase to specific initiation sites and are then released. This sigma factor is responsible for the expression of sporulation specific genes. Interaction with SpoIIAB inhibits sigma-F activity throughout the cell before the formation of the asymmetric septum; after septation the interaction is confined to the mother cell, and sigma F activity is released in the prespore. Responsible for expression of csfB (the anti-sigma-G factor Gin). Associates with the RNAP core only in stationary phase cells. In Bacillus subtilis (strain 168), this protein is RNA polymerase sigma-F factor (sigF).